Here is an 85-residue protein sequence, read N- to C-terminus: MCVSRLALLLGLLLCVGAQLSFAQHWSHGWYPGGKRELDSFGTSEISEEIKLCEAGECSYLRPQRRSILRNILLDALARELQKRK.

An N-terminal signal peptide occupies residues 1-23 (MCVSRLALLLGLLLCVGAQLSFA). Position 24 is a pyrrolidone carboxylic acid (Gln24). At Gly33 the chain carries Glycine amide.

Belongs to the GnRH family. As to expression, expressed in only one cell group in the mesencephalon.

It localises to the secreted. Its function is as follows. Stimulates the secretion of gonadotropins. This is Progonadoliberin-2 (gnrh2) from Haplochromis burtoni (Burton's mouthbrooder).